Here is a 397-residue protein sequence, read N- to C-terminus: Phosphoglycerate transport regulatory protein PgtC (397 aa).

A signal peptide spans 1-24; that stretch reads MFGSCQAYSRELVMATTFSPSATA. A helical membrane pass occupies residues 102–117; sequence TSVAVAVSGFGLLINR.

It localises to the cell membrane. Functionally, required for pgtP expression, it may act jointly with the PgtA/PgtB signaling proteins. This is Phosphoglycerate transport regulatory protein PgtC (pgtC) from Salmonella typhi.